We begin with the raw amino-acid sequence, 773 residues long: Kelch domain-containing protein 7A (773 aa).

Residues 23–40 (VVLSAAALLLVTAAYKLY) traverse the membrane as a helical segment. The N-linked (GlcNAc...) asparagine glycan is linked to asparagine 61. 2 disordered regions span residues 64–99 (EALGQLAFQEAPPGTLPRGRRRRKASKGAGTSLDYS) and 114–207 (SEEA…APNG). A Phosphoserine modification is found at serine 89. The segment covering 114-126 (SEEATRKGSDESQ) has biased composition (basic and acidic residues). The N-linked (GlcNAc...) asparagine glycan is linked to asparagine 256. The segment at 296 to 355 (KADSRPVPCPAALADAPSPGPGPEPLVTGAASRDEAANTAGGGASEAASPQPVASPSAPG) is disordered. Kelch repeat units lie at residues 323–370 (TGAA…ENPE), 488–534 (KRLV…LCTL), 537–585 (YLFV…ALEG), 586–628 (HLYA…ATVC), and 631–673 (EIFV…AVNG). Low complexity predominate over residues 340–354 (SEAASPQPVASPSAP). Serine 361 bears the Phosphoserine mark.

It localises to the membrane. The sequence is that of Kelch domain-containing protein 7A (Klhdc7a) from Mus musculus (Mouse).